The primary structure comprises 589 residues: Nicotinate phosphoribosyltransferase (589 aa).

The interval Met1–Gln30 is disordered. The segment covering Asn15–Gln30 has biased composition (polar residues). Residues Tyr68 and Thr256 each coordinate nicotinate. Phosphohistidine is present on His259. Arg356 provides a ligand contact to nicotinate. Thr418 serves as a coordination point for 5-phospho-alpha-D-ribose 1-diphosphate.

The protein belongs to the NAPRTase family. The cofactor is Mg(2+). Mn(2+) is required as a cofactor. In terms of processing, transiently phosphorylated on a His residue during the reaction cycle. Phosphorylation strongly increases the affinity for substrates and increases the rate of nicotinate D-ribonucleotide production. Dephosphorylation regenerates the low-affinity form of the enzyme, leading to product release.

The catalysed reaction is nicotinate + 5-phospho-alpha-D-ribose 1-diphosphate + ATP + H2O = nicotinate beta-D-ribonucleotide + ADP + phosphate + diphosphate. It functions in the pathway cofactor biosynthesis; NAD(+) biosynthesis; nicotinate D-ribonucleotide from nicotinate: step 1/1. Its function is as follows. Catalyzes the first step in the biosynthesis of NAD from nicotinic acid, the ATP-dependent synthesis of beta-nicotinate D-ribonucleotide from nicotinate and 5-phospho-D-ribose 1-phosphate. Helps prevent cellular oxidative stress via its role in NAD biosynthesis. The sequence is that of Nicotinate phosphoribosyltransferase (naprt) from Dictyostelium discoideum (Social amoeba).